Reading from the N-terminus, the 340-residue chain is HTH-type transcriptional regulator CelR (340 aa).

The HTH lacI-type domain maps to 1 to 61; the sequence is MERRRRPTLE…PNRAARTLVT (61 aa). The segment at residues 9 to 28 is a DNA-binding region (H-T-H motif); it reads LEMVAALAGVGRGTVSRVIN.

The protein localises to the cytoplasm. Its activity is regulated as follows. Activity is controlled by cytoplasmic cellobiose levels. Binding of CelR to the celE promoter is inhibited specifically by low concentrations of cellobiose, the major end product of cellulases. Activity may also be regulated through post-translational modification. Its function is as follows. Transcriptional regulator that regulates the expression of all six cellulases, encoded by the cel genes (designated celA through celF). Acts as a repressor. Specifically binds to a 14-bp inverted repeat site, which is present in the upstream region of the cellulase genes. The sequence is that of HTH-type transcriptional regulator CelR from Thermobifida fusca (Thermomonospora fusca).